A 457-amino-acid polypeptide reads, in one-letter code: Multidrug resistance protein MdtK (457 aa).

Helical transmembrane passes span L11 to V31, I53 to A73, W93 to I113, A127 to L147, G160 to Y180, L188 to M208, L243 to I263, F280 to G300, Y316 to L336, L357 to V377, I387 to G407, and P418 to A438.

It belongs to the multi antimicrobial extrusion (MATE) (TC 2.A.66.1) family. MdtK subfamily.

The protein resides in the cell inner membrane. Functionally, multidrug efflux pump that functions probably as a Na(+)/drug antiporter. The chain is Multidrug resistance protein MdtK from Photorhabdus laumondii subsp. laumondii (strain DSM 15139 / CIP 105565 / TT01) (Photorhabdus luminescens subsp. laumondii).